Here is an 82-residue protein sequence, read N- to C-terminus: Small ribosomal subunit protein uS17 (82 aa).

Belongs to the universal ribosomal protein uS17 family. Part of the 30S ribosomal subunit.

Its function is as follows. One of the primary rRNA binding proteins, it binds specifically to the 5'-end of 16S ribosomal RNA. This Shewanella amazonensis (strain ATCC BAA-1098 / SB2B) protein is Small ribosomal subunit protein uS17.